The sequence spans 518 residues: Glutamate--cysteine ligase (518 aa).

This sequence belongs to the glutamate--cysteine ligase type 1 family. Type 1 subfamily.

It carries out the reaction L-cysteine + L-glutamate + ATP = gamma-L-glutamyl-L-cysteine + ADP + phosphate + H(+). The protein operates within sulfur metabolism; glutathione biosynthesis; glutathione from L-cysteine and L-glutamate: step 1/2. This chain is Glutamate--cysteine ligase, found in Shigella sonnei (strain Ss046).